A 310-amino-acid chain; its full sequence is Upstream stimulatory factor 1 (310 aa).

Residues 1–17 (MKGQQKTAETEEGTVQI) show a composition bias toward polar residues. Disordered regions lie at residues 1–26 (MKGQ…ATGE) and 171–209 (QGGS…EVER). A compositionally biased stretch (basic and acidic residues) spans 190-209 (EAPRTTRDEKRRAQHNEVER). The 56-residue stretch at 199–254 (KRRAQHNEVERRRRDKINNWIVQLSKIIPDCSMESTKSGQSKGGILSKACDYIQEL) folds into the bHLH domain. The leucine-zipper stretch occupies residues 271–292 (LQLDNDVLRQQVEDLKNKNLLL). Lys306 participates in a covalent cross-link: Glycyl lysine isopeptide (Lys-Gly) (interchain with G-Cter in SUMO2).

Efficient DNA binding requires dimerization with another bHLH protein. Binds DNA as a homodimer or a heterodimer (USF1/USF2).

The protein resides in the nucleus. Its function is as follows. Transcription factor that binds to a symmetrical DNA sequence (E-boxes) (5'-CACGTG-3') that is found in a variety of viral and cellular promoters. The polypeptide is Upstream stimulatory factor 1 (USF1) (Bos taurus (Bovine)).